The following is a 215-amino-acid chain: Outer-membrane lipoprotein carrier protein (215 aa).

A signal peptide spans 1–24 (MFVLKARHLMAAGLVSLAAWSAGA).

Belongs to the LolA family. In terms of assembly, monomer.

The protein localises to the periplasm. Participates in the translocation of lipoproteins from the inner membrane to the outer membrane. Only forms a complex with a lipoprotein if the residue after the N-terminal Cys is not an aspartate (The Asp acts as a targeting signal to indicate that the lipoprotein should stay in the inner membrane). The chain is Outer-membrane lipoprotein carrier protein from Ralstonia nicotianae (strain ATCC BAA-1114 / GMI1000) (Ralstonia solanacearum).